The sequence spans 123 residues: Small ribosomal subunit protein uS13 (123 aa).

A disordered region spans residues 93–123 (RRNLPVRGQKTKTNARTRKGPKRAIGGKKKK).

Belongs to the universal ribosomal protein uS13 family. As to quaternary structure, part of the 30S ribosomal subunit. Forms a loose heterodimer with protein S19. Forms two bridges to the 50S subunit in the 70S ribosome.

Functionally, located at the top of the head of the 30S subunit, it contacts several helices of the 16S rRNA. In the 70S ribosome it contacts the 23S rRNA (bridge B1a) and protein L5 of the 50S subunit (bridge B1b), connecting the 2 subunits; these bridges are implicated in subunit movement. Contacts the tRNAs in the A and P-sites. This chain is Small ribosomal subunit protein uS13, found in Clostridium botulinum (strain Kyoto / Type A2).